The primary structure comprises 90 residues: Putative F-box protein At5g16285 (90 aa).

The 46-residue stretch at M1–K46 folds into the F-box domain.

This Arabidopsis thaliana (Mouse-ear cress) protein is Putative F-box protein At5g16285.